Here is a 322-residue protein sequence, read N- to C-terminus: HPr kinase/phosphorylase (322 aa).

Residues His-146 and Lys-167 contribute to the active site. 161-168 (GDSGLGKS) provides a ligand contact to ATP. A Mg(2+)-binding site is contributed by Ser-168. Asp-185 functions as the Proton acceptor; for phosphorylation activity. Proton donor; for dephosphorylation activity in the catalytic mechanism. Residues 209–218 (LEVRGLGLLD) are important for the catalytic mechanism of both phosphorylation and dephosphorylation. Glu-210 contributes to the Mg(2+) binding site. The active site involves Arg-250. The important for the catalytic mechanism of dephosphorylation stretch occupies residues 271–276 (QVAAGR).

The protein belongs to the HPrK/P family. Homohexamer. It depends on Mg(2+) as a cofactor.

The catalysed reaction is [HPr protein]-L-serine + ATP = [HPr protein]-O-phospho-L-serine + ADP + H(+). It carries out the reaction [HPr protein]-O-phospho-L-serine + phosphate + H(+) = [HPr protein]-L-serine + diphosphate. In terms of biological role, catalyzes the ATP- as well as the pyrophosphate-dependent phosphorylation of a specific serine residue in HPr, a phosphocarrier protein of the phosphoenolpyruvate-dependent sugar phosphotransferase system (PTS). HprK/P also catalyzes the pyrophosphate-producing, inorganic phosphate-dependent dephosphorylation (phosphorolysis) of seryl-phosphorylated HPr (P-Ser-HPr). The sequence is that of HPr kinase/phosphorylase from Paraburkholderia xenovorans (strain LB400).